Reading from the N-terminus, the 484-residue chain is MSVKGDIGVIGLAVMGQNLILNMNDHGFKVVAYNRTTSKVDEFLQGAAKGTNIIGAYSLEDLAAKLEKPRKVMLMVRAGDVVDQFIEALLPHLEEGDIIIDGGNSNYPDTNRRVKALAEKGIRFIGSGVSGGEEGARHGPSIMPGGNQEAWQYVKPIFQAISAKTEQGEPCCDWVGGEGAGHFVKMVHNGIEYGDMQLICEAYQFLKEGLGLSYEEMQAIFAEWKNTELDSYLIDITTDILGYKDASGEPLVEKILDTAGQKGTGKWTGINALDFGIPLTLITESVFARCVSSFKDQRVAANQLFGKTITPVEGDKKVWIEAVRKALLASKIISYAQGFMLIREASEQFGWDINYGATALLWREGCIIRSRFLGNIRDAYEANPNLVFLGSDSYFKGILENALSDWRKVVAKSIEVGIPMPCMASAITFLDGYTSARLPANLLQAQRDYFGAHTYERTDKPRGEFFHTNWTGRGGNTASTTYDV.

NADP(+) contacts are provided by residues 11–16, 34–36, 76–78, and asparagine 104; these read GLAVMG, NRT, and VRA. Substrate is bound by residues asparagine 104 and 130–132; that span reads SGG. The active-site Proton acceptor is the lysine 185. 188–189 serves as a coordination point for substrate; it reads HN. Glutamate 192 serves as the catalytic Proton donor. Tyrosine 193, lysine 262, arginine 289, arginine 447, and histidine 453 together coordinate substrate.

It belongs to the 6-phosphogluconate dehydrogenase family. Homodimer.

It carries out the reaction 6-phospho-D-gluconate + NADP(+) = D-ribulose 5-phosphate + CO2 + NADPH. It participates in carbohydrate degradation; pentose phosphate pathway; D-ribulose 5-phosphate from D-glucose 6-phosphate (oxidative stage): step 3/3. In terms of biological role, catalyzes the oxidative decarboxylation of 6-phosphogluconate to ribulose 5-phosphate and CO(2), with concomitant reduction of NADP to NADPH. In Haemophilus influenzae (strain ATCC 51907 / DSM 11121 / KW20 / Rd), this protein is 6-phosphogluconate dehydrogenase, decarboxylating (gnd).